Consider the following 485-residue polypeptide: Argininosuccinate lyase (485 aa).

This sequence belongs to the lyase 1 family. Argininosuccinate lyase subfamily.

Its subcellular location is the cytoplasm. It catalyses the reaction 2-(N(omega)-L-arginino)succinate = fumarate + L-arginine. It participates in amino-acid biosynthesis; L-arginine biosynthesis; L-arginine from L-ornithine and carbamoyl phosphate: step 3/3. The chain is Argininosuccinate lyase from Nitrosopumilus maritimus (strain SCM1).